Consider the following 494-residue polypeptide: Autocrine proliferation repressor protein A (494 aa).

The N-terminal stretch at 1–18 (MSKLLILLLLSLVASIFS) is a signal peptide. N-linked (GlcNAc...) asparagine glycans are attached at residues asparagine 37, asparagine 153, and asparagine 302.

The protein belongs to the pqaA family. As to quaternary structure, interacts with cfaD.

It is found in the secreted. Inhibitor that slows proliferation of secreting cells (also known as chalone). May function by binding to cell surface receptors. Requires cfaD for activity. Overexpression slows proliferation. The polypeptide is Autocrine proliferation repressor protein A (aprA) (Dictyostelium discoideum (Social amoeba)).